The sequence spans 240 residues: Membrane-spanning 4-domains subfamily A member 15 (240 aa).

The next 4 membrane-spanning stretches (helical) occupy residues 73–93, 100–120, 144–164, and 173–193; these read VLGT…SVLL, VGIF…FIIS, ILSV…FGVT, and LAVL…AMHF.

It belongs to the MS4A family.

It is found in the membrane. In terms of biological role, may be involved in signal transduction as a component of a multimeric receptor complex. This Homo sapiens (Human) protein is Membrane-spanning 4-domains subfamily A member 15 (MS4A15).